The chain runs to 407 residues: Peptidase T (407 aa).

His-82 serves as a coordination point for Zn(2+). Residue Asp-84 is part of the active site. Zn(2+) is bound at residue Asp-143. The Proton acceptor role is filled by Glu-177. Glu-178, Asp-200, and His-382 together coordinate Zn(2+).

Belongs to the peptidase M20B family. It depends on Zn(2+) as a cofactor.

The protein resides in the cytoplasm. The enzyme catalyses Release of the N-terminal residue from a tripeptide.. Cleaves the N-terminal amino acid of tripeptides. The polypeptide is Peptidase T (Streptococcus pyogenes serotype M12 (strain MGAS2096)).